The chain runs to 82 residues: Protein Vpu (82 aa).

Residues 1-7 lie on the Extracellular side of the membrane; that stretch reads MQPIPIV. The helical transmembrane segment at 8–28 threads the bilayer; sequence AIVALVVAIIIAIVVWSIVII. Over 29–82 the chain is Cytoplasmic; that stretch reads EYRKILRQRKIDRLIDRLIERAEDSGNESEGEISALVEMGVEMGHHAPWDVDDL. 2 positions are modified to phosphoserine; by host CK2: Ser-53 and Ser-57.

Belongs to the HIV-1 VPU protein family. As to quaternary structure, homopentamer. Interacts with host CD4 and BRTC; these interactions induce proteasomal degradation of CD4. Interacts (via transmembrane region) with host BST2 (via transmembrane region); this interaction leads to the degradation of host BST2. Interacts with host FBXW11. Interacts with host AP1M1; this interaction plays a role in the mistrafficking and subsequent degradation of host BST2. Interacts with host RANBP2; this interaction allows Vpu to down-regulate host BLM sumoylation. Post-translationally, phosphorylated by host CK2. This phosphorylation is necessary for interaction with human BTRC and degradation of CD4.

The protein resides in the host membrane. With respect to regulation, ion channel activity is inhibited by hexamethylene amiloride in vitro. Enhances virion budding by targeting host CD4 and Tetherin/BST2 to proteasome degradation. Degradation of CD4 prevents any unwanted premature interactions between viral Env and its host receptor CD4 in the endoplasmic reticulum. Degradation of antiretroviral protein Tetherin/BST2 is important for virion budding, as BST2 tethers new viral particles to the host cell membrane. Mechanistically, Vpu bridges either CD4 or BST2 to BTRC, a substrate recognition subunit of the Skp1/Cullin/F-box protein E3 ubiquitin ligase, induces their ubiquitination and subsequent proteasomal degradation. The alteration of the E3 ligase specificity by Vpu seems to promote the degradation of host IKBKB, leading to NF-kappa-B down-regulation and subsequent apoptosis. Acts as a viroporin that forms an oligomeric ion channel in membranes. Modulates the host DNA repair mechanisms to promote degradation of nuclear viral cDNA in cells that are already productively infected in order to suppress immune sensing and proviral hyper-integration (superinfection). Manipulates PML-NBs and modulates SUMOylation of host BLM protein thereby enhancing its DNA-end processing activity toward viral unintegrated linear DNA. Also inhibits RAD52-mediated homologous repair of viral cDNA, preventing the generation of dead-end circular forms of single copies of the long terminal repeat and permitting sustained nucleolytic attack. This is Protein Vpu from Human immunodeficiency virus type 1 group M subtype B (isolate HXB2) (HIV-1).